The sequence spans 96 residues: Teretoxin Tan6.14 (96 aa).

A signal peptide spans 1–21 (MRPLLVFVLMVSVSLAFSLEG). Positions 22–60 (MPNNGGDSVASITANQARRFKRNPLFSFAQHSLVDLKAR) are excised as a propeptide.

In terms of processing, contains 3 disulfide bonds. In terms of tissue distribution, expressed by the venom duct.

It localises to the secreted. This chain is Teretoxin Tan6.14, found in Terebra anilis (Auger snail).